Here is a 173-residue protein sequence, read N- to C-terminus: RNA pyrophosphohydrolase (173 aa).

Residues 11-164 (PYRRSVGILV…KKHVYMKIVN (154 aa)) form the Nudix hydrolase domain. Residues 52–73 (GGIDENEEPLDAARRELYEETG) carry the Nudix box motif.

Belongs to the Nudix hydrolase family. RppH subfamily. A divalent metal cation serves as cofactor.

Its function is as follows. Accelerates the degradation of transcripts by removing pyrophosphate from the 5'-end of triphosphorylated RNA, leading to a more labile monophosphorylated state that can stimulate subsequent ribonuclease cleavage. The protein is RNA pyrophosphohydrolase of Bartonella henselae (strain ATCC 49882 / DSM 28221 / CCUG 30454 / Houston 1) (Rochalimaea henselae).